Reading from the N-terminus, the 1324-residue chain is Coiled-coil domain-containing protein 171 (1324 aa).

Coiled-coil stretches lie at residues 29-296 (KNET…RAAH), 325-393 (AEAV…RLQY), 453-521 (FSVV…KCAD), 599-712 (SELC…VREN), and 981-1145 (FTQR…KECV). Polar residues predominate over residues 1301-1312 (PHSLSSQSSPGV). Residues 1301–1324 (PHSLSSQSSPGVPTNAKRPSQIGL) are disordered.

This Mus musculus (Mouse) protein is Coiled-coil domain-containing protein 171 (Ccdc171).